Reading from the N-terminus, the 103-residue chain is Small ribosomal subunit protein bS20 (103 aa).

Basic residues predominate over residues 1–20 (MATAKPKKKNPRLASGRKRV). The disordered stretch occupies residues 1–31 (MATAKPKKKNPRLASGRKRVRQDTKLNAANT).

Belongs to the bacterial ribosomal protein bS20 family.

In terms of biological role, binds directly to 16S ribosomal RNA. This is Small ribosomal subunit protein bS20 from Polaromonas sp. (strain JS666 / ATCC BAA-500).